The sequence spans 152 residues: Probable flagellum biosynthesis repressor protein FlbT (152 aa).

The protein belongs to the FlbT family.

Has a post-transcriptional repressor function in flagellum biogenesis. Associates with the 5'-UTR of fljK mRNA and promotes its degradation. The chain is Probable flagellum biosynthesis repressor protein FlbT from Brucella abortus (strain S19).